The following is a 60-amino-acid chain: UPF0291 protein Nther_1806 (60 aa).

This sequence belongs to the UPF0291 family.

The protein localises to the cytoplasm. In Natranaerobius thermophilus (strain ATCC BAA-1301 / DSM 18059 / JW/NM-WN-LF), this protein is UPF0291 protein Nther_1806.